We begin with the raw amino-acid sequence, 81 residues long: Photosystem I iron-sulfur center (81 aa).

2 consecutive 4Fe-4S ferredoxin-type domains span residues S2 to W31 and V39 to Y68. Positions 11, 14, 17, 21, 48, 51, 54, and 58 each coordinate [4Fe-4S] cluster.

As to quaternary structure, the cyanobacterial PSI reaction center is composed of one copy each of PsaA,B,C,D,E,F,I,J,K,L,M and X, and forms trimeric complexes. The cofactor is [4Fe-4S] cluster.

The protein resides in the cellular thylakoid membrane. It carries out the reaction reduced [plastocyanin] + hnu + oxidized [2Fe-2S]-[ferredoxin] = oxidized [plastocyanin] + reduced [2Fe-2S]-[ferredoxin]. Functionally, apoprotein for the two 4Fe-4S centers FA and FB of photosystem I (PSI); essential for photochemical activity. FB is the terminal electron acceptor of PSI, donating electrons to ferredoxin. The C-terminus interacts with PsaA/B/D and helps assemble the protein into the PSI complex. Required for binding of PsaD and PsaE to PSI. PSI is a plastocyanin/cytochrome c6-ferredoxin oxidoreductase, converting photonic excitation into a charge separation, which transfers an electron from the donor P700 chlorophyll pair to the spectroscopically characterized acceptors A0, A1, FX, FA and FB in turn. This chain is Photosystem I iron-sulfur center, found in Trichormus variabilis (strain ATCC 29413 / PCC 7937) (Anabaena variabilis).